The primary structure comprises 284 residues: Tropomyosin (284 aa).

A coiled-coil region spans residues 1-284 (MDAIKKKMQA…DQTFAEIAGY (284 aa)). The interval 103-133 (EEKLATTTEKLEEASKAADESERNRKVLEGR) is disordered.

The protein belongs to the tropomyosin family. In terms of assembly, homodimer.

Its function is as follows. Tropomyosin, in association with the troponin complex, plays a central role in the calcium dependent regulation of muscle contraction. The polypeptide is Tropomyosin (Chlamys nipponensis akazara (Akazara scallop)).